The sequence spans 273 residues: MEPIQGVVLGIIQGLTEFLPVSSSGHLVLVQHLFGITEPALFFDVSLHMGTLLAVLIVFRKDLGMMAVSVGRGIVAMFGGIAPRSDRDAEGLKLALLIVVGSVPTAILGLGLKQVDHLFFSLPLVGAMLLVTGTLLWLTRDRDTGGVGVSGFSKGRAFWIGMVQGLAVLPGISRSGATIAAGLFLGLDRATAARFSFLLCIPAIVGAELLSAVDLFSGHARLDLATVLGSLTAFVVGYGALKVLIRIVQQGRFYLFAPYCFILGGVTLWIGMR.

9 helical membrane-spanning segments follow: residues 1–21, 39–59, 63–83, 92–112, 118–138, 165–185, 195–215, 225–245, and 252–272; these read MEPI…FLPV, PALF…LIVF, LGMM…GIAP, LKLA…GLGL, LFFS…LLWL, GLAV…GLFL, FSFL…AVDL, ATVL…KVLI, and RFYL…WIGM.

It belongs to the UppP family.

Its subcellular location is the cell inner membrane. It catalyses the reaction di-trans,octa-cis-undecaprenyl diphosphate + H2O = di-trans,octa-cis-undecaprenyl phosphate + phosphate + H(+). In terms of biological role, catalyzes the dephosphorylation of undecaprenyl diphosphate (UPP). Confers resistance to bacitracin. This is Undecaprenyl-diphosphatase from Desulfosudis oleivorans (strain DSM 6200 / JCM 39069 / Hxd3) (Desulfococcus oleovorans).